Here is a 914-residue protein sequence, read N- to C-terminus: Neutral alpha-glucosidase C (914 aa).

Asp511 acts as the Nucleophile in catalysis. Residue Glu514 is part of the active site. Asp587 acts as the Proton donor in catalysis.

This sequence belongs to the glycosyl hydrolase 31 family.

It catalyses the reaction Hydrolysis of terminal, non-reducing (1-&gt;4)-linked alpha-D-glucose residues with release of alpha-D-glucose.. Has alpha-glucosidase activity. The sequence is that of Neutral alpha-glucosidase C (GANC) from Homo sapiens (Human).